Consider the following 123-residue polypeptide: Small ribosomal subunit protein uS12 (123 aa).

At Asp-89 the chain carries 3-methylthioaspartic acid.

The protein belongs to the universal ribosomal protein uS12 family. In terms of assembly, part of the 30S ribosomal subunit. Contacts proteins S8 and S17. May interact with IF1 in the 30S initiation complex.

Its function is as follows. With S4 and S5 plays an important role in translational accuracy. Interacts with and stabilizes bases of the 16S rRNA that are involved in tRNA selection in the A site and with the mRNA backbone. Located at the interface of the 30S and 50S subunits, it traverses the body of the 30S subunit contacting proteins on the other side and probably holding the rRNA structure together. The combined cluster of proteins S8, S12 and S17 appears to hold together the shoulder and platform of the 30S subunit. The protein is Small ribosomal subunit protein uS12 of Rhizobium meliloti (strain 1021) (Ensifer meliloti).